We begin with the raw amino-acid sequence, 229 residues long: MAALGHLAGEAAAAPGPGTPCASRGARLPGPVSSARNPSTVCLCPEQPTCSNADSRAHPLGDEGGTASKKQKNKKKTRNRASVANGGEKASEKLAPEEVPLSAEAQAQQLAQELAWCVEQLELGLKRQKPTPKQKEQAIGAIRTLRSKRTPLPRKRQLMHSLFGDYRAQMEAEWREALRALRAAAYSAQVQPVDGATRKKSQRVCRPRSIWRAKATLDMPDEEFRFNFF.

The span at 1-16 (MAALGHLAGEAAAAPG) shows a compositional bias: low complexity. The tract at residues 1 to 96 (MAALGHLAGE…GEKASEKLAP (96 aa)) is disordered. Alanine 2 is modified (N-acetylalanine). Arginine 27 is subject to Omega-N-methylarginine. Over residues 69 to 79 (KKQKNKKKTRN) the composition is skewed to basic residues. Residue serine 82 is modified to Phosphoserine.

It belongs to the UPF0488 family.

The protein is UPF0488 protein C8orf33 (C8orf33) of Homo sapiens (Human).